The following is a 377-amino-acid chain: Chaperone protein DnaJ (377 aa).

Residues 5–69 (EFYDRLGVSK…QKRSAYDQYG (65 aa)) form the J domain. Residues 133–215 (GVEKDVSYHR…CHGTGHEKET (83 aa)) form a CR-type zinc finger. Residues Cys-146, Cys-149, Cys-163, Cys-166, Cys-189, Cys-192, Cys-203, and Cys-206 each coordinate Zn(2+). CXXCXGXG motif repeat units lie at residues 146–153 (CHTCAGSG), 163–170 (CGRCHGSG), 189–196 (CDVCHGSG), and 203–210 (CQTCHGTG).

Belongs to the DnaJ family. Homodimer. Requires Zn(2+) as cofactor.

It is found in the cytoplasm. Participates actively in the response to hyperosmotic and heat shock by preventing the aggregation of stress-denatured proteins and by disaggregating proteins, also in an autonomous, DnaK-independent fashion. Unfolded proteins bind initially to DnaJ; upon interaction with the DnaJ-bound protein, DnaK hydrolyzes its bound ATP, resulting in the formation of a stable complex. GrpE releases ADP from DnaK; ATP binding to DnaK triggers the release of the substrate protein, thus completing the reaction cycle. Several rounds of ATP-dependent interactions between DnaJ, DnaK and GrpE are required for fully efficient folding. Also involved, together with DnaK and GrpE, in the DNA replication of plasmids through activation of initiation proteins. The polypeptide is Chaperone protein DnaJ (Streptococcus uberis (strain ATCC BAA-854 / 0140J)).